A 392-amino-acid polypeptide reads, in one-letter code: Na(+)/H(+) antiporter NhaA (392 aa).

The next 11 membrane-spanning stretches (helical) occupy residues 17–37, 59–79, 95–115, 125–145, 154–174, 179–199, 213–233, 254–274, 290–310, 328–348, and 363–383; these read ILLIVAAIIALIMANTPLSAL, LILWVNDALMAIFFLVVGLEV, IFPAIAAVGGMLAPALIYLFF, GWAIPAATDIAFALGVMALLG, VFLLALAIIDDLGVIVIIALF, VALVPLLLAALITIMLFILNW, FILWVCILKSGIHATIAGVIV, VLHPWVAYLILPLFAFSNAGV, VGIALGLFLGKPIGIFLFSWV, IFAVSVLCGIGFTMSIFIAGL, and LGILVGSTMAAVVGYLLLNSV.

The protein belongs to the NhaA Na(+)/H(+) (TC 2.A.33) antiporter family.

Its subcellular location is the cell inner membrane. The enzyme catalyses Na(+)(in) + 2 H(+)(out) = Na(+)(out) + 2 H(+)(in). Its function is as follows. Na(+)/H(+) antiporter that extrudes sodium in exchange for external protons. This is Na(+)/H(+) antiporter NhaA from Proteus mirabilis (strain HI4320).